The chain runs to 289 residues: MIKPGIIMGNLISVTGGFLLAAKGSVDLTLMLMTILGLSLVVASGCGLNNCIDRDIDAKMQRTRNRVTVTGEISVYSVLVFSLALGLIGFGLLAIFTNKIALLFAVIGYLVYVGIYSLYMKRHSVYGTLIGSFSGAVPPVVGYCAVTGEIDTGAVILLLMFSLWQMPHSYAIAIFRYKDYAAAKIPVLPVAKGMTRAKLHIVLYIAVFSLVSALLPLAGYTGIAFMAVTCATSLWWLGMALKGYQRDINLNQWARQVFGCSIVTITALSIAMAMDFQLVVQTPLLTLSN.

9 helical membrane passes run 1 to 21 (MIKPGIIMGNLISVTGGFLLA), 28 to 48 (LTLMLMTILGLSLVVASGCGL), 76 to 96 (YSVLVFSLALGLIGFGLLAIF), 100 to 120 (IALLFAVIGYLVYVGIYSLYM), 125 to 145 (VYGTLIGSFSGAVPPVVGYCA), 155 to 175 (VILLLMFSLWQMPHSYAIAIF), 199 to 219 (LHIVLYIAVFSLVSALLPLAG), 221 to 241 (TGIAFMAVTCATSLWWLGMAL), and 260 to 280 (CSIVTITALSIAMAMDFQLVV).

Belongs to the UbiA prenyltransferase family. Protoheme IX farnesyltransferase subfamily.

Its subcellular location is the cell inner membrane. It catalyses the reaction heme b + (2E,6E)-farnesyl diphosphate + H2O = Fe(II)-heme o + diphosphate. It functions in the pathway porphyrin-containing compound metabolism; heme O biosynthesis; heme O from protoheme: step 1/1. Functionally, converts heme B (protoheme IX) to heme O by substitution of the vinyl group on carbon 2 of heme B porphyrin ring with a hydroxyethyl farnesyl side group. The sequence is that of Protoheme IX farnesyltransferase 2 from Shewanella woodyi (strain ATCC 51908 / MS32).